The following is a 722-amino-acid chain: 1,4-alpha-glucan branching enzyme GlgB (722 aa).

The Nucleophile role is filled by D401. Residue E454 is the Proton donor of the active site.

The protein belongs to the glycosyl hydrolase 13 family. GlgB subfamily. As to quaternary structure, monomer.

The enzyme catalyses Transfers a segment of a (1-&gt;4)-alpha-D-glucan chain to a primary hydroxy group in a similar glucan chain.. It functions in the pathway glycan biosynthesis; glycogen biosynthesis. In terms of biological role, catalyzes the formation of the alpha-1,6-glucosidic linkages in glycogen by scission of a 1,4-alpha-linked oligosaccharide from growing alpha-1,4-glucan chains and the subsequent attachment of the oligosaccharide to the alpha-1,6 position. The polypeptide is 1,4-alpha-glucan branching enzyme GlgB (Rubrobacter xylanophilus (strain DSM 9941 / JCM 11954 / NBRC 16129 / PRD-1)).